The chain runs to 386 residues: 1-deoxy-D-xylulose 5-phosphate reductoisomerase (386 aa).

NADPH-binding residues include Ser-10, Gly-11, Ser-12, Val-13, Asn-38, and Asn-120. Lys-121 contributes to the 1-deoxy-D-xylulose 5-phosphate binding site. Glu-122 lines the NADPH pocket. Residue Asp-146 participates in Mn(2+) binding. Residues Ser-147, Glu-148, Ser-172, and His-195 each contribute to the 1-deoxy-D-xylulose 5-phosphate site. A Mn(2+)-binding site is contributed by Glu-148. Gly-201 provides a ligand contact to NADPH. 4 residues coordinate 1-deoxy-D-xylulose 5-phosphate: Ser-208, Asn-213, Lys-214, and Glu-217. Glu-217 lines the Mn(2+) pocket.

Belongs to the DXR family. Mg(2+) is required as a cofactor. It depends on Mn(2+) as a cofactor.

It catalyses the reaction 2-C-methyl-D-erythritol 4-phosphate + NADP(+) = 1-deoxy-D-xylulose 5-phosphate + NADPH + H(+). It participates in isoprenoid biosynthesis; isopentenyl diphosphate biosynthesis via DXP pathway; isopentenyl diphosphate from 1-deoxy-D-xylulose 5-phosphate: step 1/6. In terms of biological role, catalyzes the NADPH-dependent rearrangement and reduction of 1-deoxy-D-xylulose-5-phosphate (DXP) to 2-C-methyl-D-erythritol 4-phosphate (MEP). This Leptospira biflexa serovar Patoc (strain Patoc 1 / Ames) protein is 1-deoxy-D-xylulose 5-phosphate reductoisomerase.